The sequence spans 250 residues: 2,5-dichloro-2,5-cyclohexadiene-1,4-diol dehydrogenase LinX (250 aa).

Residues Asp-38, Asp-64, Val-65, Tyr-156, Lys-160, Thr-191, and Thr-194 each contribute to the NAD(+) site. Tyr-156 acts as the Proton acceptor in catalysis.

This sequence belongs to the short-chain dehydrogenases/reductases (SDR) family.

The enzyme catalyses 2,5-dichlorocyclohexa-2,5-dien-1,4-diol + NAD(+) = 2,5-dichlorohydroquinone + NADH + H(+). Catalyzes the degradation of 2,5-dichloro-2,5-cyclohexadiene-1,4-diol (2,5-DDOL) into 2,5-dichlorohydroquinone (2,5-DCHQ) in vitro. LinX appears not to be involved in gamma-hexachlorocyclohexane (gamma-HCH) degradation pathway, in contrast to LinC which has the same enzymatic activity. The polypeptide is 2,5-dichloro-2,5-cyclohexadiene-1,4-diol dehydrogenase LinX (Sphingobium indicum (strain DSM 16412 / CCM 7286 / MTCC 6364 / B90A)).